A 55-amino-acid chain; its full sequence is ATP synthase F(0) complex subunit 8 (55 aa).

Residues 4 to 24 (LNPAPWFTILVFSWMIFLAII) form a helical membrane-spanning segment. Over residues 32–41 (TSPNDSSPLS) the composition is skewed to polar residues. The segment at 32-55 (TSPNDSSPLSTEKHKTESWDWPWQ) is disordered.

The protein belongs to the ATPase protein 8 family. As to quaternary structure, component of the ATP synthase complex composed at least of ATP5F1A/subunit alpha, ATP5F1B/subunit beta, ATP5MC1/subunit c (homooctomer), MT-ATP6/subunit a, MT-ATP8/subunit 8, ATP5ME/subunit e, ATP5MF/subunit f, ATP5MG/subunit g, ATP5MK/subunit k, ATP5MJ/subunit j, ATP5F1C/subunit gamma, ATP5F1D/subunit delta, ATP5F1E/subunit epsilon, ATP5PF/subunit F6, ATP5PB/subunit b, ATP5PD/subunit d, ATP5PO/subunit OSCP. ATP synthase complex consists of a soluble F(1) head domain (subunits alpha(3) and beta(3)) - the catalytic core - and a membrane F(0) domain - the membrane proton channel (subunits c, a, 8, e, f, g, k and j). These two domains are linked by a central stalk (subunits gamma, delta, and epsilon) rotating inside the F1 region and a stationary peripheral stalk (subunits F6, b, d, and OSCP).

It is found in the mitochondrion membrane. Subunit 8, of the mitochondrial membrane ATP synthase complex (F(1)F(0) ATP synthase or Complex V) that produces ATP from ADP in the presence of a proton gradient across the membrane which is generated by electron transport complexes of the respiratory chain. ATP synthase complex consist of a soluble F(1) head domain - the catalytic core - and a membrane F(1) domain - the membrane proton channel. These two domains are linked by a central stalk rotating inside the F(1) region and a stationary peripheral stalk. During catalysis, ATP synthesis in the catalytic domain of F(1) is coupled via a rotary mechanism of the central stalk subunits to proton translocation. In vivo, can only synthesize ATP although its ATP hydrolase activity can be activated artificially in vitro. Part of the complex F(0) domain. This Formosania lacustris (Oriental stream loach) protein is ATP synthase F(0) complex subunit 8.